The sequence spans 366 residues: Chorismate synthase (366 aa).

Residue arginine 46 coordinates NADP(+). Residues 122–124 (RSS), 243–244 (NG), glycine 284, 299–303 (KPTPS), and arginine 325 each bind FMN.

Belongs to the chorismate synthase family. Homotetramer. It depends on FMNH2 as a cofactor.

It carries out the reaction 5-O-(1-carboxyvinyl)-3-phosphoshikimate = chorismate + phosphate. It participates in metabolic intermediate biosynthesis; chorismate biosynthesis; chorismate from D-erythrose 4-phosphate and phosphoenolpyruvate: step 7/7. In terms of biological role, catalyzes the anti-1,4-elimination of the C-3 phosphate and the C-6 proR hydrogen from 5-enolpyruvylshikimate-3-phosphate (EPSP) to yield chorismate, which is the branch point compound that serves as the starting substrate for the three terminal pathways of aromatic amino acid biosynthesis. This reaction introduces a second double bond into the aromatic ring system. The protein is Chorismate synthase of Campylobacter hominis (strain ATCC BAA-381 / DSM 21671 / CCUG 45161 / LMG 19568 / NCTC 13146 / CH001A).